Consider the following 239-residue polypeptide: tRNA1(Val) (adenine(37)-N6)-methyltransferase (239 aa).

Belongs to the methyltransferase superfamily. tRNA (adenine-N(6)-)-methyltransferase family.

It localises to the cytoplasm. The enzyme catalyses adenosine(37) in tRNA1(Val) + S-adenosyl-L-methionine = N(6)-methyladenosine(37) in tRNA1(Val) + S-adenosyl-L-homocysteine + H(+). Functionally, specifically methylates the adenine in position 37 of tRNA(1)(Val) (anticodon cmo5UAC). The sequence is that of tRNA1(Val) (adenine(37)-N6)-methyltransferase from Vibrio parahaemolyticus serotype O3:K6 (strain RIMD 2210633).